Here is an 81-residue protein sequence, read N- to C-terminus: Bacteriochlorophyll c-binding protein (81 aa).

Residue histidine 25 participates in a bacteriochlorophyll c binding.

It belongs to the BChl C/E-binding protein family.

It is found in the chlorosome. It localises to the chlorosome envelope. Functionally, component of the photosynthetic apparatus. The light harvesting B740 complex binds bacteriochlorophyll c. The sequence is that of Bacteriochlorophyll c-binding protein (csmA) from Prosthecochloris aestuarii (strain DSM 271 / SK 413).